Here is a 718-residue protein sequence, read N- to C-terminus: Putative aminodeoxychorismate synthase (718 aa).

The Glutamine amidotransferase type-1 domain maps to 9-203 (QILLIDCYDS…LSLADTPNIQ (195 aa)). The Nucleophile role is filled by Cys-88. Catalysis depends on residues His-177 and Glu-179. A PABB component region spans residues 266–718 (FLDSAKKPGR…NLKNKKRSCK (453 aa)).

The protein in the C-terminal section; belongs to the anthranilate synthase component I family.

The protein resides in the cytoplasm. It localises to the nucleus. The catalysed reaction is chorismate + L-glutamine = 4-amino-4-deoxychorismate + L-glutamate. Its pathway is cofactor biosynthesis; tetrahydrofolate biosynthesis; 4-aminobenzoate from chorismate: step 1/2. In terms of biological role, catalyzes the biosynthesis of 4-amino-4-deoxychorismate (ADC) from chorismate and glutamine. Required for the synthesis of 4-aminobenzoate (PABA), an important component in tetrahydrofolate biosynthesis. This chain is Putative aminodeoxychorismate synthase, found in Schizosaccharomyces pombe (strain 972 / ATCC 24843) (Fission yeast).